Here is a 1134-residue protein sequence, read N- to C-terminus: Tyrosine-protein kinase receptor Tie-1 (1134 aa).

Positions 1-22 (MVWWGSSLLLPTLFLASHVGAS) are cleaved as a signal peptide. At 23–755 (VDLTLLANLR…SRAAEEGLDQ (733 aa)) the chain is on the extracellular side. One can recognise an Ig-like C2-type 1 domain in the interval 43-123 (CVSGEAGAGR…VLYVHNSPGA (81 aa)). N-linked (GlcNAc...) asparagine glycans are attached at residues Asn-81 and Asn-159. 3 EGF-like domains span residues 212–254 (GCGA…TRCE), 256–301 (ACRE…SQCQ), and 303–343 (ACAP…VHCE). 9 disulfides stabilise this stretch: Cys-226–Cys-235, Cys-229–Cys-242, Cys-244–Cys-253, Cys-266–Cys-276, Cys-270–Cys-289, Cys-291–Cys-300, Cys-313–Cys-325, Cys-319–Cys-331, and Cys-333–Cys-342. In terms of domain architecture, Ig-like C2-type 2 spans 349–440 (PQILSMATEV…GQDSRRFKVN (92 aa)). Fibronectin type-III domains are found at residues 444 to 543 (PPVP…CPEP), 546 to 638 (QPWL…LPPS), and 642 to 736 (APRH…LGNG). Asn-501, Asn-592, and Asn-705 each carry an N-linked (GlcNAc...) asparagine glycan. A helical membrane pass occupies residues 756 to 780 (QLVLAVVGSVSATCLTILAALLALV). At 781 to 1134 (CIRRSCLHRR…AGIDATAEEA (354 aa)) the chain is on the cytoplasmic side. The 280-residue stretch at 835–1114 (ITFEDLIGEG…RMLEARKAYV (280 aa)) folds into the Protein kinase domain. ATP-binding positions include 841–849 (IGEGNFGQV) and Lys-866. Residue Asp-975 is the Proton acceptor of the active site. Tyr-1003 carries the post-translational modification Phosphotyrosine; by autocatalysis.

Belongs to the protein kinase superfamily. Tyr protein kinase family. Tie subfamily. In terms of assembly, heterodimer with TEK/TIE2. Interacts with SVEP1 (via C-terminus). Phosphorylated on tyrosine residues in response to ANGPT1, most likely by TEK/TIE2. As to expression, specifically expressed in developing vascular endothelial cells. Abundantly expressed in lung and heart, moderately in brain, liver and kidney, and weakly in thymus, spleen and testis.

Its subcellular location is the cell membrane. The catalysed reaction is L-tyrosyl-[protein] + ATP = O-phospho-L-tyrosyl-[protein] + ADP + H(+). Its function is as follows. Transmembrane tyrosine-protein kinase that may modulate TEK/TIE2 activity and contribute to the regulation of angiogenesis. The protein is Tyrosine-protein kinase receptor Tie-1 (Tie1) of Mus musculus (Mouse).